The sequence spans 68 residues: uncharacterized protein (68 aa).

This is an uncharacterized protein from Orgyia pseudotsugata (Douglas-fir tussock moth).